We begin with the raw amino-acid sequence, 287 residues long: Proteasome subunit alpha (287 aa).

The interval 241-287 is disordered; the sequence is GVVAGEEPHTAAHAPSVPQPGAPAGLGDPGAPDTGGTAGSGGEAPTT. The segment covering 262–275 has biased composition (low complexity); that stretch reads APAGLGDPGAPDTG. Over residues 276-287 the composition is skewed to gly residues; that stretch reads GTAGSGGEAPTT.

It belongs to the peptidase T1A family. As to quaternary structure, the 20S proteasome core is composed of 14 alpha and 14 beta subunits that assemble into four stacked heptameric rings, resulting in a barrel-shaped structure. The two inner rings, each composed of seven catalytic beta subunits, are sandwiched by two outer rings, each composed of seven alpha subunits. The catalytic chamber with the active sites is on the inside of the barrel. Has a gated structure, the ends of the cylinder being occluded by the N-termini of the alpha-subunits. Is capped by the proteasome-associated ATPase, ARC.

Its subcellular location is the cytoplasm. It functions in the pathway protein degradation; proteasomal Pup-dependent pathway. With respect to regulation, the formation of the proteasomal ATPase ARC-20S proteasome complex, likely via the docking of the C-termini of ARC into the intersubunit pockets in the alpha-rings, may trigger opening of the gate for substrate entry. Interconversion between the open-gate and close-gate conformations leads to a dynamic regulation of the 20S proteasome proteolysis activity. Its function is as follows. Component of the proteasome core, a large protease complex with broad specificity involved in protein degradation. The sequence is that of Proteasome subunit alpha from Geodermatophilus obscurus (strain ATCC 25078 / DSM 43160 / JCM 3152 / CCUG 61914 / KCC A-0152 / KCTC 9177 / NBRC 13315 / NRRL B-3577 / G-20).